A 1049-amino-acid polypeptide reads, in one-letter code: Exotoxin PaxA (1049 aa).

Transmembrane regions (helical) follow at residues 246–266 (GLGLDIISSLLSGVTASFTLA), 311–331 (GPAAALIASSISLAISPLSFL), 375–395 (ITTISTALSAIAAGTAAASAG), and 397–417 (LVGAPITLLVTGITGLISGIL). Hemolysin-type calcium-binding repeat units lie at residues 744–761 (KGSKFRDIFHGADGDDLL), 762–779 (NGNDGDDILYGDKGNDEL), 780–797 (RGDNGNDQLYGGEGNDKL), 798–815 (FGGNGNNYLSGGDGDDEL), 826–843 (RGGKGNDKLYGGAGSDFL), and 844–861 (DGGEGDDYLAGGEGNDFY).

The protein belongs to the RTX prokaryotic toxin (TC 1.C.11) family.

It is found in the secreted. Its subcellular location is the host cell membrane. Functionally, paxA is associated with abortion cases in swine and septicemia in young piglets. Shows cohemolytic activity with the sphingomyelinase of S.aureus but is devoid of direct hemolytic activity. The protein is Exotoxin PaxA (paxA) of Pasteurella aerogenes.